A 792-amino-acid polypeptide reads, in one-letter code: Endonuclease MutS2 (792 aa).

344–351 (GPNTGGKT) lines the ATP pocket. One can recognise a Smr domain in the interval 716–791 (IHLRGLHVEE…GLGVTVVYLE (76 aa)).

It belongs to the DNA mismatch repair MutS family. MutS2 subfamily. In terms of assembly, homodimer. Binds to stalled ribosomes, contacting rRNA.

Functionally, endonuclease that is involved in the suppression of homologous recombination and thus may have a key role in the control of bacterial genetic diversity. In terms of biological role, acts as a ribosome collision sensor, splitting the ribosome into its 2 subunits. Detects stalled/collided 70S ribosomes which it binds and splits by an ATP-hydrolysis driven conformational change. Acts upstream of the ribosome quality control system (RQC), a ribosome-associated complex that mediates the extraction of incompletely synthesized nascent chains from stalled ribosomes and their subsequent degradation. Probably generates substrates for RQC. This is Endonuclease MutS2 from Thermomicrobium roseum (strain ATCC 27502 / DSM 5159 / P-2).